Consider the following 423-residue polypeptide: Gamma-glutamyl phosphate reductase (423 aa).

This sequence belongs to the gamma-glutamyl phosphate reductase family.

Its subcellular location is the cytoplasm. The enzyme catalyses L-glutamate 5-semialdehyde + phosphate + NADP(+) = L-glutamyl 5-phosphate + NADPH + H(+). Its pathway is amino-acid biosynthesis; L-proline biosynthesis; L-glutamate 5-semialdehyde from L-glutamate: step 2/2. Catalyzes the NADPH-dependent reduction of L-glutamate 5-phosphate into L-glutamate 5-semialdehyde and phosphate. The product spontaneously undergoes cyclization to form 1-pyrroline-5-carboxylate. The polypeptide is Gamma-glutamyl phosphate reductase (Paraburkholderia phymatum (strain DSM 17167 / CIP 108236 / LMG 21445 / STM815) (Burkholderia phymatum)).